A 447-amino-acid polypeptide reads, in one-letter code: Phosphoglucosamine mutase (447 aa).

The Phosphoserine intermediate role is filled by serine 102. Mg(2+)-binding residues include serine 102, aspartate 241, aspartate 243, and aspartate 245. Residue serine 102 is modified to Phosphoserine.

This sequence belongs to the phosphohexose mutase family. Mg(2+) is required as a cofactor. In terms of processing, activated by phosphorylation.

It carries out the reaction alpha-D-glucosamine 1-phosphate = D-glucosamine 6-phosphate. In terms of biological role, catalyzes the conversion of glucosamine-6-phosphate to glucosamine-1-phosphate. This Methylococcus capsulatus (strain ATCC 33009 / NCIMB 11132 / Bath) protein is Phosphoglucosamine mutase.